The following is a 229-amino-acid chain: Peroxiredoxin 1 (229 aa).

Positions 33-192 constitute a Thioredoxin domain; sequence LGPKNKAPDF…AFRTLKAFQF (160 aa). Residue cysteine 78 is the Cysteine sulfenic acid (-SOH) intermediate of the active site.

This sequence belongs to the peroxiredoxin family. AhpC/Prx1 subfamily. In terms of assembly, homodimer; disulfide-linked, upon oxidation.

The enzyme catalyses a hydroperoxide + [thioredoxin]-dithiol = an alcohol + [thioredoxin]-disulfide + H2O. Functionally, thiol-specific peroxidase that catalyzes the reduction of hydrogen peroxide and organic hydroperoxides to water and alcohols, respectively. Plays a role in cell protection against oxidative stress by detoxifying peroxides and as sensor of hydrogen peroxide-mediated signaling events. The protein is Peroxiredoxin 1 (TSA1) of Brugia malayi (Filarial nematode worm).